A 63-amino-acid polypeptide reads, in one-letter code: UPF0434 protein Sde_1297 (63 aa).

It belongs to the UPF0434 family.

This Saccharophagus degradans (strain 2-40 / ATCC 43961 / DSM 17024) protein is UPF0434 protein Sde_1297.